The primary structure comprises 242 residues: Probable 2-phosphosulfolactate phosphatase (242 aa).

Belongs to the ComB family. Requires Mg(2+) as cofactor.

It carries out the reaction (2R)-O-phospho-3-sulfolactate + H2O = (2R)-3-sulfolactate + phosphate. This chain is Probable 2-phosphosulfolactate phosphatase, found in Synechococcus sp. (strain JA-3-3Ab) (Cyanobacteria bacterium Yellowstone A-Prime).